A 20-amino-acid polypeptide reads, in one-letter code: Brevinin-1DYc (20 aa).

The cysteines at positions 14 and 20 are disulfide-linked.

In terms of tissue distribution, expressed by the skin glands.

The protein localises to the secreted. Its function is as follows. Antimicrobial peptide. Has low activity against the Gram-positive bacterium S.aureus and the Gram-negative bacterium E.coli (MIC&lt;15 uM). Has a strong hemolytic activity. The chain is Brevinin-1DYc from Rana dybowskii (Dybovsky's frog).